Reading from the N-terminus, the 143-residue chain is Hemoglobin subunit alpha-2 (143 aa).

At Ser2 the chain carries N-acetylserine. One can recognise a Globin domain in the interval 2–143 (SLSSKQKATV…LALALAEKYR (142 aa)). An O2-binding site is contributed by His60. His89 lines the heme b pocket.

Belongs to the globin family. As to quaternary structure, hb 2 is a heterotetramer of two alpha-2 and two beta-2 chains. Red blood cells.

Involved in oxygen transport from gills to the various peripheral tissues. This chain is Hemoglobin subunit alpha-2 (hba2), found in Gadus morhua (Atlantic cod).